The primary structure comprises 59 residues: Large ribosomal subunit protein bL32 (59 aa).

A disordered region spans residues 1–40 (MAVQQNKKSPSKRGMHRSHDFLRTTPLSVDPGTGEVHLRH).

This sequence belongs to the bacterial ribosomal protein bL32 family.

This is Large ribosomal subunit protein bL32 from Nitrosospira multiformis (strain ATCC 25196 / NCIMB 11849 / C 71).